A 151-amino-acid polypeptide reads, in one-letter code: Ubiquitin-conjugating enzyme E2 W (151 aa).

Methionine 1 is covalently cross-linked (Peptide (Met-Gly) (interchain with G-Cter in ubiquitin)). Residues serine 3–cysteine 151 enclose the UBC core domain. The Glycyl thioester intermediate role is filled by cysteine 91.

The protein belongs to the ubiquitin-conjugating enzyme family. Homodimer. Interacts with FANCL. Interacts with STUB1/CHIP. Autoubiquitinated at Met-1.

Its subcellular location is the nucleus. It catalyses the reaction S-ubiquitinyl-[E1 ubiquitin-activating enzyme]-L-cysteine + [E2 ubiquitin-conjugating enzyme]-L-cysteine = [E1 ubiquitin-activating enzyme]-L-cysteine + S-ubiquitinyl-[E2 ubiquitin-conjugating enzyme]-L-cysteine.. It carries out the reaction S-ubiquitinyl-[E1 ubiquitin-activating enzyme]-L-cysteine + [acceptor protein]-N-terminal-amino acid = [E1 ubiquitin-activating enzyme]-L-cysteine + N-terminal-ubiquitinyl-[acceptor protein].. It participates in protein modification; protein ubiquitination. In terms of biological role, accepts ubiquitin from the E1 complex and catalyzes its covalent attachment to other proteins. Specifically monoubiquitinates the N-terminus of various substrates, including ATXN3, MAPT/TAU, POLR2H/RPB8 and STUB1/CHIP, by recognizing backbone atoms of disordered N-termini. Involved in degradation of misfolded chaperone substrates by mediating monoubiquitination of STUB1/CHIP, leading to recruitment of ATXN3 to monoubiquitinated STUB1/CHIP, and restriction of the length of ubiquitin chain attached to STUB1/CHIP substrates by ATXN3. After UV irradiation, but not after mitomycin-C (MMC) treatment, acts as a specific E2 ubiquitin-conjugating enzyme for the Fanconi anemia complex by associating with E3 ubiquitin-protein ligase FANCL and catalyzing monoubiquitination of FANCD2, a key step in the DNA damage pathway. In vitro catalyzes 'Lys-11'-linked polyubiquitination. UBE2W-catalyzed ubiquitination also occurs in the presence of inactive RING/U-box type E3s, i.e. lacking the active site cysteine residues to form thioester bonds with ubiquitin, or even in the absence of E3, albeit at a slower rate. This chain is Ubiquitin-conjugating enzyme E2 W (Ube2w), found in Mus musculus (Mouse).